We begin with the raw amino-acid sequence, 314 residues long: tRNA-cytidine(32) 2-sulfurtransferase (314 aa).

Residues 49 to 54 carry the PP-loop motif motif; that stretch reads SGGKDS. 3 residues coordinate [4Fe-4S] cluster: cysteine 124, cysteine 127, and cysteine 215.

The protein belongs to the TtcA family. In terms of assembly, homodimer. Mg(2+) serves as cofactor. The cofactor is [4Fe-4S] cluster.

The protein localises to the cytoplasm. The catalysed reaction is cytidine(32) in tRNA + S-sulfanyl-L-cysteinyl-[cysteine desulfurase] + AH2 + ATP = 2-thiocytidine(32) in tRNA + L-cysteinyl-[cysteine desulfurase] + A + AMP + diphosphate + H(+). It participates in tRNA modification. Its function is as follows. Catalyzes the ATP-dependent 2-thiolation of cytidine in position 32 of tRNA, to form 2-thiocytidine (s(2)C32). The sulfur atoms are provided by the cysteine/cysteine desulfurase (IscS) system. The chain is tRNA-cytidine(32) 2-sulfurtransferase from Histophilus somni (strain 2336) (Haemophilus somnus).